The chain runs to 398 residues: Phosphoglycerate kinase (398 aa).

Residues 23-25 (DLN), arginine 38, 61-64 (HFGR), arginine 120, and arginine 153 contribute to the substrate site. Residues lysine 203, glutamate 325, and 355–358 (GGDT) contribute to the ATP site.

The protein belongs to the phosphoglycerate kinase family. Monomer.

It localises to the cytoplasm. The enzyme catalyses (2R)-3-phosphoglycerate + ATP = (2R)-3-phospho-glyceroyl phosphate + ADP. Its pathway is carbohydrate degradation; glycolysis; pyruvate from D-glyceraldehyde 3-phosphate: step 2/5. This Mesorhizobium japonicum (strain LMG 29417 / CECT 9101 / MAFF 303099) (Mesorhizobium loti (strain MAFF 303099)) protein is Phosphoglycerate kinase.